The chain runs to 357 residues: Carbamoyl phosphate synthase small chain (357 aa).

Positions 1-168 are CPSase; that stretch reads MSKRLLILED…STATAYPSPN (168 aa). Positions 46, 220, and 222 each coordinate L-glutamine. The Glutamine amidotransferase type-1 domain maps to 172 to 357; sequence KVVVVDFGLK…FMDLMDNFKK (186 aa). Cys-247 functions as the Nucleophile in the catalytic mechanism. L-glutamine-binding residues include Leu-248, Gln-251, Asn-289, Gly-291, and Tyr-292. Catalysis depends on residues His-331 and Asp-333.

It belongs to the CarA family. In terms of assembly, composed of two chains; the small (or glutamine) chain promotes the hydrolysis of glutamine to ammonia, which is used by the large (or ammonia) chain to synthesize carbamoyl phosphate. Tetramer of heterodimers (alpha,beta)4.

It catalyses the reaction hydrogencarbonate + L-glutamine + 2 ATP + H2O = carbamoyl phosphate + L-glutamate + 2 ADP + phosphate + 2 H(+). The enzyme catalyses L-glutamine + H2O = L-glutamate + NH4(+). The protein operates within amino-acid biosynthesis; L-arginine biosynthesis; carbamoyl phosphate from bicarbonate: step 1/1. It participates in pyrimidine metabolism; UMP biosynthesis via de novo pathway; (S)-dihydroorotate from bicarbonate: step 1/3. In terms of biological role, small subunit of the glutamine-dependent carbamoyl phosphate synthetase (CPSase). CPSase catalyzes the formation of carbamoyl phosphate from the ammonia moiety of glutamine, carbonate, and phosphate donated by ATP, constituting the first step of 2 biosynthetic pathways, one leading to arginine and/or urea and the other to pyrimidine nucleotides. The small subunit (glutamine amidotransferase) binds and cleaves glutamine to supply the large subunit with the substrate ammonia. The chain is Carbamoyl phosphate synthase small chain from Lactococcus lactis subsp. cremoris (strain MG1363).